A 34-amino-acid polypeptide reads, in one-letter code: Photosystem II reaction center protein M (34 aa).

Residues 5–25 traverse the membrane as a helical segment; sequence ILAFIATALFILVPTAFLLII.

Belongs to the PsbM family. PSII is composed of 1 copy each of membrane proteins PsbA, PsbB, PsbC, PsbD, PsbE, PsbF, PsbH, PsbI, PsbJ, PsbK, PsbL, PsbM, PsbT, PsbX, PsbY, PsbZ, Psb30/Ycf12, at least 3 peripheral proteins of the oxygen-evolving complex and a large number of cofactors. It forms dimeric complexes.

The protein localises to the plastid. It localises to the chloroplast thylakoid membrane. Functionally, one of the components of the core complex of photosystem II (PSII). PSII is a light-driven water:plastoquinone oxidoreductase that uses light energy to abstract electrons from H(2)O, generating O(2) and a proton gradient subsequently used for ATP formation. It consists of a core antenna complex that captures photons, and an electron transfer chain that converts photonic excitation into a charge separation. This subunit is found at the monomer-monomer interface. The chain is Photosystem II reaction center protein M from Cucumis sativus (Cucumber).